Reading from the N-terminus, the 277-residue chain is MWPLALVIASLTLALSGGVSQESSKVLNTNGTSGFLPGGYTCFPHSQPWQAALLVQGRLLCGGVLVHPKWVLTAAHCLKEGLKVYLGKHALGRVEAGEQVREVVHSIPHPEYRRSPTHLNHDHDIMLLELQSPVQLTGYIQTLPLSHNNRLTPGTTCRVSGWGTTTSPQVNYPKTLQCANIQLRSDEECRQVYPGKITDNMLCAGTKEGGKDSCEGDSGGPLVCNRTLYGIVSWGDFPCGQPDRPGVYTRVSRYVLWIRETIRKYETQQQKWLKGPQ.

A signal peptide spans 1–16 (MWPLALVIASLTLALS). N-linked (GlcNAc...) asparagine glycosylation occurs at Asn-30. The Peptidase S1 domain maps to 36–263 (LPGGYTCFPH…YVLWIRETIR (228 aa)). Disulfide bonds link Cys-42–Cys-178, Cys-61–Cys-77, Cys-157–Cys-224, Cys-189–Cys-203, and Cys-214–Cys-239. Catalysis depends on charge relay system residues His-76 and Asp-124. Ser-218 functions as the Charge relay system in the catalytic mechanism. Asn-225 is a glycosylation site (N-linked (GlcNAc...) asparagine).

The protein belongs to the peptidase S1 family. Kallikrein subfamily. Expressed in prostate, breast, testis and salivary gland.

The protein resides in the secreted. The protein is Kallikrein-13 (KLK13) of Homo sapiens (Human).